The chain runs to 295 residues: Sulfotransferase 1 family member D1 (295 aa).

48-53 (KSGTTW) lines the 3'-phosphoadenylyl sulfate pocket. Substrate is bound by residues phenylalanine 81 and 106 to 108 (KTH). Histidine 108 (proton acceptor) is an active-site residue. 3'-phosphoadenylyl sulfate is bound by residues arginine 130 and serine 138. Substrate is bound at residue phenylalanine 142. 3'-phosphoadenylyl sulfate-binding positions include tyrosine 193, 227–232 (SSFSVM), and 257–259 (RKG).

The protein belongs to the sulfotransferase 1 family. As to expression, detected in kidney and liver. Detected in kidney collecting duct cells.

It localises to the cytoplasm. Functionally, sulfotransferase with broad substrate specificity that utilizes 3'-phospho-5'-adenylyl sulfate (PAPS) as sulfonate donor to catalyze the sulfate conjugation of catecholamines, such as dopamine, prostaglandins, leukotriene E4, drugs and xenobiotic compounds. Has sulfotransferase activity towards p-nitrophenol, 2-naphthylamine and minoxidil (in vitro). Sulfonation increases the water solubility of most compounds, and therefore their renal excretion, but it can also result in bioactivation to form active metabolites. The sequence is that of Sulfotransferase 1 family member D1 (Sult1d1) from Mus musculus (Mouse).